We begin with the raw amino-acid sequence, 302 residues long: MSDSRRVPITFQGLIQTLNQYWAEQGCVLIQPLDLEVGAGTFHPATFLRALGPEPWNAAYVQPSRRPTDGRYGENPNRLQRYYQYQVAMKPNPDNIQDLYLGSLQALGIDPLVHDLRFVEDNWESPTLGAWGVGWEVWLNGMEVTQFTYFQQAGGLECKPVLGEITYGLERLCMYLQRCDNVYALVWTYGPDGAAVTYGDVYHQNEVEQSTYNFEHANVAELFHRFDACEAEAKHLVEVGLPLPAYEQVTKASHAFNLLDARRAISVTERQRYILRVRALAQGVAQAYYAQREKLGFPGVKQ.

The protein belongs to the class-II aminoacyl-tRNA synthetase family. In terms of assembly, tetramer of two alpha and two beta subunits.

The protein localises to the cytoplasm. It catalyses the reaction tRNA(Gly) + glycine + ATP = glycyl-tRNA(Gly) + AMP + diphosphate. The sequence is that of Glycine--tRNA ligase alpha subunit from Xanthomonas oryzae pv. oryzae (strain PXO99A).